The following is a 786-amino-acid chain: UPF0313 protein SO_0311 (786 aa).

In terms of domain architecture, Radical SAM core spans alanine 371 to alanine 649. [4Fe-4S] cluster is bound by residues cysteine 385, cysteine 389, and cysteine 392. 2 disordered regions span residues asparagine 669–methionine 688 and leucine 698–lysine 786. Basic and acidic residues-rich tracts occupy residues glycine 679–methionine 688 and phenylalanine 706–glycine 717. Low complexity predominate over residues lysine 718 to alanine 731. Positions asparagine 732–threonine 741 are enriched in polar residues.

The protein belongs to the UPF0313 family. [4Fe-4S] cluster is required as a cofactor.

The protein is UPF0313 protein SO_0311 of Shewanella oneidensis (strain ATCC 700550 / JCM 31522 / CIP 106686 / LMG 19005 / NCIMB 14063 / MR-1).